Consider the following 353-residue polypeptide: ATP-dependent kinase YFH7 (353 aa).

Residue 31 to 39 (GPPGSGKST) participates in ATP binding.

It belongs to the YFH7 family.

ATP-dependent kinase that could be involved in endoplasmic reticulum membrane assembly. This is ATP-dependent kinase YFH7 (YFH7) from Kluyveromyces lactis (strain ATCC 8585 / CBS 2359 / DSM 70799 / NBRC 1267 / NRRL Y-1140 / WM37) (Yeast).